The sequence spans 266 residues: 2-C-methyl-D-erythritol 4-phosphate cytidylyltransferase (266 aa).

Positions 234–251 are enriched in basic and acidic residues; that stretch reads ADDARSAEARSAEARSEE. The interval 234 to 266 is disordered; sequence ADDARSAEARSAEARSEEPQFAGARSTDARSGG.

This sequence belongs to the IspD/TarI cytidylyltransferase family. IspD subfamily.

The enzyme catalyses 2-C-methyl-D-erythritol 4-phosphate + CTP + H(+) = 4-CDP-2-C-methyl-D-erythritol + diphosphate. The protein operates within isoprenoid biosynthesis; isopentenyl diphosphate biosynthesis via DXP pathway; isopentenyl diphosphate from 1-deoxy-D-xylulose 5-phosphate: step 2/6. In terms of biological role, catalyzes the formation of 4-diphosphocytidyl-2-C-methyl-D-erythritol from CTP and 2-C-methyl-D-erythritol 4-phosphate (MEP). The polypeptide is 2-C-methyl-D-erythritol 4-phosphate cytidylyltransferase (Frankia casuarinae (strain DSM 45818 / CECT 9043 / HFP020203 / CcI3)).